We begin with the raw amino-acid sequence, 847 residues long: Receptor-like protein 12 (847 aa).

The signal sequence occupies residues 1–27 (MMIRSHRHWVFSSRIIIFLSLLVHSLA). Topologically, residues 28–798 (SSSPHFCRDD…LSEAEENMFN (771 aa)) are extracellular. Asn52, Asn66, Asn103, and Asn132 each carry an N-linked (GlcNAc...) asparagine glycan. LRR repeat units lie at residues 109–133 (LQYLRHLDLTNCNLYGEIPSSLGNL), 135–157 (HLTLVNLYFNKFVGEIPASIGNL), 158–181 (NQLRHLILANNVLTGEIPSSLGNL), 183–205 (RLVNLELFSNRLVGKIPDSIGDL), 206–229 (KQLRNLSLASNNLIGEIPSSLGNL), 231–253 (NLVHLVLTHNQLVGEVPASIGNL), 254–277 (IELRVMSFENNSLSGNIPISFANL), 279–301 (KLSIFVLSSNNFTSTFPFDMSIF), 302–325 (HNLEYFDVSYNSFSGPFPKSLLLI), 326–350 (PSLESIYLQENQFTGPIEFANTSSS), 351–374 (TKLQDLILGRNRLHGPIPESISRL), 375–398 (LNLEELDISHNNFTGAIPPTISKL), 400–422 (NLLHLDLSKNNLEGEVPACLWRL), 424–442 (TMVLSHNSFSSFENTSQEE), 443–466 (ALIEELDLNSNSFQGPIPYMICKL), 467–491 (SSLGFLDLSNNLFSGSIPSCIRNFS), 492–514 (GSIKELNLGDNNFSGTLPDIFSK), 516–539 (TELVSLDVSHNQLEGKFPKSLINC), 541–562 (ALELVNVESNKIKDIFPSWLES), 563–587 (LPSLHVLNLRSNKFYGPLYHRHASI), 589–613 (FQSLRIIDISHNNFSGTLPPYYFSN), 657–681 (RRDFRAIDFSGNKINGNIPESLGYL), 682–704 (KELRVLNLSGNAFTSVIPRFLAN), 705–729 (LTKLETLDISRNKLSGQIPQDLAAL), and 731–754 (FLSYMNFSHNLLQGPVPRGTQFQR). Residue Asn180 is glycosylated (N-linked (GlcNAc...) asparagine). N-linked (GlcNAc...) asparagine glycans are attached at residues Asn210 and Asn228. Residues Asn263, Asn276, and Asn289 are each glycosylated (N-linked (GlcNAc...) asparagine). A glycan (N-linked (GlcNAc...) asparagine) is linked at Asn346. Asn386 carries N-linked (GlcNAc...) asparagine glycosylation. A glycan (N-linked (GlcNAc...) asparagine) is linked at Asn437. 2 N-linked (GlcNAc...) asparagine glycosylation sites follow: Asn489 and Asn503. Asn601 carries N-linked (GlcNAc...) asparagine glycosylation. N-linked (GlcNAc...) asparagine glycans are attached at residues Asn688 and Asn704. Residue Asn736 is glycosylated (N-linked (GlcNAc...) asparagine). Residues 799–819 (WVAAAIAYGPGVLCGLVIGHF) form a helical membrane-spanning segment. Residues 820-847 (YTSHNHEWFTEKFGRKQHKALTSVKCSL) lie on the Cytoplasmic side of the membrane.

This sequence belongs to the RLP family.

The protein resides in the cell membrane. Involved in the perception of CLV3 and CLV3-like peptides, that act as extracellular signals regulating meristems maintenance. This Arabidopsis thaliana (Mouse-ear cress) protein is Receptor-like protein 12.